Reading from the N-terminus, the 732-residue chain is Copper-transporting ATPase (732 aa).

The Cytoplasmic portion of the chain corresponds to 1 to 88 (MTKAQFYIEG…NPSFLTPNVK (88 aa)). Residues 2-68 (TKAQFYIEGM…QIEKLGYQPR (67 aa)) enclose the HMA domain. Cu(+) contacts are provided by Cys13 and Cys16. The chain crosses the membrane as a helical span at residues 89–109 (LALVLLGTLGVLALSMFAPLL). Residues 110 to 122 (PLPSFLKNPFING) are Extracellular-facing. The helical transmembrane segment at 123-142 (IVQLVLSLMVMHMGRNFYVH) threads the bilayer. Residues 143-149 (GFKALWA) lie on the Cytoplasmic side of the membrane. Residues 150–170 (RQPNMDSLIALGTSAALLYSL) traverse the membrane as a helical segment. At 171–187 (VLLFRAYTHAPIEGYYF) the chain is on the extracellular side. The helical transmembrane segment at 188–208 (ESVCVILLFVMAGKRVEENSK) threads the bilayer. At 209–336 (DKALEAMQSL…KAPIARLADK (128 aa)) the chain is on the cytoplasmic side. The helical transmembrane segment at 337–359 (VAGVFVPIVIGIASIAFLVWLVL) threads the bilayer. Residues 360–365 (GDFTRA) are Extracellular-facing. A helical membrane pass occupies residues 366–383 (LEVFIAILVISCPCALGL). At 384–663 (ATPMALLVAQ…KLSALTIANI (280 aa)) the chain is on the cytoplasmic side. The active-site 4-aspartylphosphate intermediate is Asp421. 2 residues coordinate Mg(2+): Asp609 and Asp613. Residues 664–683 (KQNLFWAFCYNSIAIPLACG) traverse the membrane as a helical segment. Topologically, residues 684–694 (VAYKLGIMFNP) are extracellular. A helical membrane pass occupies residues 695–713 (MLASLAMSLSSVSVVLNAQ). Over 714–732 (RLRGAHFKIRGSHENRHSS) the chain is Cytoplasmic.

The protein belongs to the cation transport ATPase (P-type) (TC 3.A.3) family. Type IB subfamily.

It localises to the cell membrane. It catalyses the reaction Cu(+)(in) + ATP + H2O = Cu(+)(out) + ADP + phosphate + H(+). Its function is as follows. Probably involved in copper export. The polypeptide is Copper-transporting ATPase (copA) (Helicobacter felis (strain ATCC 49179 / CCUG 28539 / NCTC 12436 / CS1)).